The primary structure comprises 433 residues: Trigger factor (433 aa).

Residues 163-248 (GDTVNIDFSG…VNEIKFKEVP (86 aa)) enclose the PPIase FKBP-type domain.

This sequence belongs to the FKBP-type PPIase family. Tig subfamily.

The protein localises to the cytoplasm. It catalyses the reaction [protein]-peptidylproline (omega=180) = [protein]-peptidylproline (omega=0). Its function is as follows. Involved in protein export. Acts as a chaperone by maintaining the newly synthesized protein in an open conformation. Functions as a peptidyl-prolyl cis-trans isomerase. This Staphylococcus aureus (strain bovine RF122 / ET3-1) protein is Trigger factor.